The chain runs to 95 residues: Integration host factor subunit beta (95 aa).

The tract at residues 52–95 (SLHHRPPRVGRNPKTGESVHLPSRRVPHFKPGKELRDRVNSIKD) is disordered. The span at 82 to 95 (PGKELRDRVNSIKD) shows a compositional bias: basic and acidic residues.

The protein belongs to the bacterial histone-like protein family. Heterodimer of an alpha and a beta chain.

Functionally, this protein is one of the two subunits of integration host factor, a specific DNA-binding protein that functions in genetic recombination as well as in transcriptional and translational control. The polypeptide is Integration host factor subunit beta (Methylococcus capsulatus (strain ATCC 33009 / NCIMB 11132 / Bath)).